A 108-amino-acid chain; its full sequence is MSQRYLRMDLSIALGALPQWQAHPTRQALQKRYRFDHFNAAFGFMSRVAMFAEKIDHHPEWSNVYNRVDVVLTTHDAGGVTELDVRMAQFMDEAAAQAGATGLSLPVY.

Belongs to the pterin-4-alpha-carbinolamine dehydratase family.

It carries out the reaction (4aS,6R)-4a-hydroxy-L-erythro-5,6,7,8-tetrahydrobiopterin = (6R)-L-erythro-6,7-dihydrobiopterin + H2O. This chain is Putative pterin-4-alpha-carbinolamine dehydratase, found in Bordetella avium (strain 197N).